The primary structure comprises 347 residues: UDP-3-O-acylglucosamine N-acyltransferase (347 aa).

The active-site Proton acceptor is the His242.

This sequence belongs to the transferase hexapeptide repeat family. LpxD subfamily. In terms of assembly, homotrimer.

The enzyme catalyses a UDP-3-O-[(3R)-3-hydroxyacyl]-alpha-D-glucosamine + a (3R)-hydroxyacyl-[ACP] = a UDP-2-N,3-O-bis[(3R)-3-hydroxyacyl]-alpha-D-glucosamine + holo-[ACP] + H(+). Its pathway is bacterial outer membrane biogenesis; LPS lipid A biosynthesis. Catalyzes the N-acylation of UDP-3-O-acylglucosamine using 3-hydroxyacyl-ACP as the acyl donor. Is involved in the biosynthesis of lipid A, a phosphorylated glycolipid that anchors the lipopolysaccharide to the outer membrane of the cell. This Dechloromonas aromatica (strain RCB) protein is UDP-3-O-acylglucosamine N-acyltransferase.